A 589-amino-acid polypeptide reads, in one-letter code: Heterogeneous nuclear ribonucleoprotein L (589 aa).

Over residues 1 to 16 the composition is skewed to basic residues; it reads MSRRLLPRAEKRRRRL. The disordered stretch occupies residues 1–100; the sequence is MSRRLLPRAE…NYDDPHKTPA (100 aa). A compositionally biased stretch (basic and acidic residues) spans 17–27; the sequence is EQRQQPDEQRR. The segment covering 38-54 has biased composition (gly residues); it reads AGGGGGGGRYYGGGSEG. Position 52 is a phosphoserine (S52). Residues K59 and K62 each participate in a glycyl lysine isopeptide (Lys-Gly) (interchain with G-Cter in SUMO2) cross-link. Over residues 69–90 the composition is skewed to gly residues; sequence QHGGGGGGGGGAGAAGGGGGGE. Position 101 is a phosphoserine (S101). The RRM 1 domain occupies 102–176; sequence PVVHIRGLID…HPAFVNYSTS (75 aa). A Glycyl lysine isopeptide (Lys-Gly) (interchain with G-Cter in SUMO2) cross-link involves residue K136. S185 carries the phosphoserine modification. The 78-residue stretch at 193–270 folds into the RRM 2 domain; it reads SVLLFTILNP…CTLKIEYAKP (78 aa). The residue at position 269 (K269) is an N6-acetyllysine. Polar residues predominate over residues 284 to 301; that stretch reads DYTNPNLSGQGDPGSNPN. Residues 284-378 form a disordered region; sequence DYTNPNLSGQ…PPPPPEYGPH (95 aa). S291 and S298 each carry phosphoserine. A Glycyl lysine isopeptide (Lys-Gly) (interchain with G-Cter in SUMO2) cross-link involves residue K302. Asymmetric dimethylarginine occurs at positions 354 and 358. The span at 364-375 shows a compositional bias: pro residues; sequence GHPPPPPPPPEY. S381 is modified (phosphoserine). RRM domains are found at residues 382-478 and 495-583; these read PVLM…KDFS and RIQH…LCFS. The residue at position 544 (S544) is a Phosphoserine; by CaMK4. A Glycyl lysine isopeptide (Lys-Gly) (interchain with G-Cter in SUMO2) cross-link involves residue K568.

As to quaternary structure, identified in a IGF2BP1-dependent mRNP granule complex containing untranslated mRNAs. Interacts with HNRNPLL. Interacts with APEX1; the interaction is DNA-dependent. Component of a complex with SETD2. Interacts with ELAVL1. Part of a transcription inhibitory ribonucleoprotein complex composed at least of the circular RNA circZNF827, ZNF827 and HNRNPK. Interacts with CHD8 in an RNA-dependent manner. In terms of processing, several isoelectric forms of the L protein are probably the results of post-translational modifications. Phosphorylation at Ser-544 by CaMK4 enhances interaction with a CaMK4-responsive RNA element (CaRRE1), and prevents inclusion of the stress axis-regulated exon (STREX) of the KCNMA1 potassium channel transcripts upon membrane depolarization.

Its subcellular location is the nucleus. The protein resides in the nucleoplasm. It is found in the cytoplasm. Its function is as follows. Splicing factor binding to exonic or intronic sites and acting as either an activator or repressor of exon inclusion. Exhibits a binding preference for CA-rich elements. Component of the heterogeneous nuclear ribonucleoprotein (hnRNP) complexes and associated with most nascent transcripts. Associates, together with APEX1, to the negative calcium responsive element (nCaRE) B2 of the APEX2 promoter. As part of a ribonucleoprotein complex composed at least of ZNF827, HNRNPK and the circular RNA circZNF827 that nucleates the complex on chromatin, may negatively regulate the transcription of genes involved in neuronal differentiation. Regulates alternative splicing of a core group of genes involved in neuronal differentiation, likely by mediating H3K36me3-coupled transcription elongation and co-transcriptional RNA processing via interaction with CHD8. The polypeptide is Heterogeneous nuclear ribonucleoprotein L (HNRNPL) (Homo sapiens (Human)).